Reading from the N-terminus, the 86-residue chain is Anti-adapter protein IraP (86 aa).

The stretch at 1 to 36 (MKNLIAELLFKLAQKEEESKELCAQVEALEIIVTAM) forms a coiled coil.

It belongs to the IraP family. In terms of assembly, interacts with RssB.

Its subcellular location is the cytoplasm. Functionally, inhibits RpoS proteolysis by regulating RssB activity, thereby increasing the stability of the sigma stress factor RpoS especially during phosphate starvation, but also in stationary phase and during nitrogen starvation. Its effect on RpoS stability is due to its interaction with RssB, which probably blocks the interaction of RssB with RpoS, and the consequent delivery of the RssB-RpoS complex to the ClpXP protein degradation pathway. This Shigella sonnei (strain Ss046) protein is Anti-adapter protein IraP.